Here is an 85-residue protein sequence, read N- to C-terminus: ATP synthase subunit c (85 aa).

The next 2 membrane-spanning stretches (helical) occupy residues 22 to 39 (AIGA…IGKI) and 65 to 85 (AALI…VFFL).

Belongs to the ATPase C chain family. F-type ATPases have 2 components, F(1) - the catalytic core - and F(0) - the membrane proton channel. F(1) has five subunits: alpha(3), beta(3), gamma(1), delta(1), epsilon(1). F(0) has three main subunits: a(1), b(2) and c(10-14). The alpha and beta chains form an alternating ring which encloses part of the gamma chain. F(1) is attached to F(0) by a central stalk formed by the gamma and epsilon chains, while a peripheral stalk is formed by the delta and b chains.

The protein resides in the cell inner membrane. Functionally, f(1)F(0) ATP synthase produces ATP from ADP in the presence of a proton or sodium gradient. F-type ATPases consist of two structural domains, F(1) containing the extramembraneous catalytic core and F(0) containing the membrane proton channel, linked together by a central stalk and a peripheral stalk. During catalysis, ATP synthesis in the catalytic domain of F(1) is coupled via a rotary mechanism of the central stalk subunits to proton translocation. Its function is as follows. Key component of the F(0) channel; it plays a direct role in translocation across the membrane. A homomeric c-ring of between 10-14 subunits forms the central stalk rotor element with the F(1) delta and epsilon subunits. The chain is ATP synthase subunit c from Bacteroides thetaiotaomicron (strain ATCC 29148 / DSM 2079 / JCM 5827 / CCUG 10774 / NCTC 10582 / VPI-5482 / E50).